The following is a 932-amino-acid chain: Protein translocase subunit SecA (932 aa).

Residues glutamine 87, 105 to 109 (GEGKT), and aspartate 515 each bind ATP. Cysteine 916, cysteine 918, cysteine 927, and histidine 928 together coordinate Zn(2+).

The protein belongs to the SecA family. In terms of assembly, monomer and homodimer. Part of the essential Sec protein translocation apparatus which comprises SecA, SecYEG and auxiliary proteins SecDF-YajC and YidC. It depends on Zn(2+) as a cofactor.

It localises to the cell inner membrane. The protein resides in the cytoplasm. It catalyses the reaction ATP + H2O + cellular proteinSide 1 = ADP + phosphate + cellular proteinSide 2.. Functionally, part of the Sec protein translocase complex. Interacts with the SecYEG preprotein conducting channel. Has a central role in coupling the hydrolysis of ATP to the transfer of proteins into and across the cell membrane, serving both as a receptor for the preprotein-SecB complex and as an ATP-driven molecular motor driving the stepwise translocation of polypeptide chains across the membrane. The sequence is that of Protein translocase subunit SecA from Burkholderia multivorans (strain ATCC 17616 / 249).